Here is a 149-residue protein sequence, read N- to C-terminus: C-type lectin domain family 2 member B (149 aa).

Residues 1 to 7 lie on the Cytoplasmic side of the membrane; it reads MMTKHKK. Residues 8-25 traverse the membrane as a helical; Signal-anchor for type II membrane protein segment; the sequence is CFIIVGVLITTNIITLIV. Residues 26–149 lie on the Extracellular side of the membrane; that stretch reads KLTRDSQSLC…RKWICRKRIH (124 aa). Cys35 and Cys46 are oxidised to a cystine. The C-type lectin domain occupies 42–145; it reads FQNKCYYFSK…CYTERKWICR (104 aa). N-linked (GlcNAc...) asparagine glycans are attached at residues Asn57, Asn62, and Asn100. 2 disulfides stabilise this stretch: Cys63/Cys144 and Cys123/Cys136.

As to quaternary structure, homodimer. Interacts with NKp80/KLRF1. In terms of processing, (Microbial infection) Ubiquitinated by human herpesvirus 8 protein K5, leading to endolysosomal degradation. Post-translationally, N-linked glycosylated; required to enable surface expression and the extent of surface expression correlates with the number of functional conventional N-glycosylation sites. Expressed preferentially in lymphoid tissues, and in most hematopoietic cell types.

The protein localises to the cell membrane. Its subcellular location is the golgi apparatus membrane. Functionally, membrane-bound protein expressed on myeloid cells which acts as a ligand to stimulate the activating receptor NKp80/KLRF1, expressed on the surface of natural killer (NK) cells. In turn, stimulates NK-cell cytotoxicity and cytokine production leading to the cytolysis of malignant CLEC2B-expressing myeloid cells. This chain is C-type lectin domain family 2 member B (CLEC2B), found in Homo sapiens (Human).